Here is a 376-residue protein sequence, read N- to C-terminus: Endoplasmic reticulum-Golgi intermediate compartment protein 2 (376 aa).

Topologically, residues 1-33 (MRRLNKKKALNFVRELDAFPKVPESYVETTASG) are cytoplasmic. The chain crosses the membrane as a helical span at residues 34 to 54 (GTVSLLAFTAMALLAFFEFFV). Residues 55-318 (YRDTWMKYEY…PFWQFLVRLC (264 aa)) lie on the Lumenal side of the membrane. Residues 319 to 339 (GIIGGIFSTTGMLHNLVGFCV) form a helical membrane-spanning segment. Residues 340 to 376 (DVVCCRFKLGVYKPKSMSDFDGQINSLTPLLSENAEQ) lie on the Cytoplasmic side of the membrane.

It belongs to the ERGIC family.

Its subcellular location is the endoplasmic reticulum-Golgi intermediate compartment membrane. It is found in the golgi apparatus. The protein localises to the cis-Golgi network membrane. The protein resides in the endoplasmic reticulum membrane. In terms of biological role, possible role in transport between endoplasmic reticulum and Golgi. This chain is Endoplasmic reticulum-Golgi intermediate compartment protein 2 (ergic2), found in Danio rerio (Zebrafish).